We begin with the raw amino-acid sequence, 172 residues long: Peptidyl-prolyl cis-trans isomerase (172 aa).

Positions 7 to 170 (FFDMSVGGQP…KKVVVEDCGQ (164 aa)) constitute a PPIase cyclophilin-type domain.

This sequence belongs to the cyclophilin-type PPIase family. In terms of processing, not glycosylated. As to expression, expressed in pollen.

Its subcellular location is the cytoplasm. The enzyme catalyses [protein]-peptidylproline (omega=180) = [protein]-peptidylproline (omega=0). Binds cyclosporin A (CsA). CsA mediates some of its effects via an inhibitory action on PPIase. PPIases accelerate the folding of proteins. It catalyzes the cis-trans isomerization of proline imidic peptide bonds in oligopeptides. This chain is Peptidyl-prolyl cis-trans isomerase (PCKR1), found in Catharanthus roseus (Madagascar periwinkle).